Here is a 260-residue protein sequence, read N- to C-terminus: Cytochrome c oxidase subunit 3 (260 aa).

Helical transmembrane passes span 41-61 (LTLV…RDII), 81-101 (GMIL…WAFF), 133-153 (TGVL…ILAG), 161-181 (ALFL…WEYI), 196-216 (FFVA…FLMV), and 238-258 (AWYW…IYWW).

This sequence belongs to the cytochrome c oxidase subunit 3 family. Component of the cytochrome c oxidase (complex IV, CIV), a multisubunit enzyme composed of a catalytic core of 3 subunits and several supernumerary subunits. The complex exists as a monomer or a dimer and forms supercomplexes (SCs) in the inner mitochondrial membrane with ubiquinol-cytochrome c oxidoreductase (cytochrome b-c1 complex, complex III, CIII).

Its subcellular location is the mitochondrion inner membrane. It carries out the reaction 4 Fe(II)-[cytochrome c] + O2 + 8 H(+)(in) = 4 Fe(III)-[cytochrome c] + 2 H2O + 4 H(+)(out). In terms of biological role, component of the cytochrome c oxidase, the last enzyme in the mitochondrial electron transport chain which drives oxidative phosphorylation. The respiratory chain contains 3 multisubunit complexes succinate dehydrogenase (complex II, CII), ubiquinol-cytochrome c oxidoreductase (cytochrome b-c1 complex, complex III, CIII) and cytochrome c oxidase (complex IV, CIV), that cooperate to transfer electrons derived from NADH and succinate to molecular oxygen, creating an electrochemical gradient over the inner membrane that drives transmembrane transport and the ATP synthase. Cytochrome c oxidase is the component of the respiratory chain that catalyzes the reduction of oxygen to water. Electrons originating from reduced cytochrome c in the intermembrane space (IMS) are transferred via the dinuclear copper A center (CU(A)) of subunit 2 and heme A of subunit 1 to the active site in subunit 1, a binuclear center (BNC) formed by heme A3 and copper B (CU(B)). The BNC reduces molecular oxygen to 2 water molecules using 4 electrons from cytochrome c in the IMS and 4 protons from the mitochondrial matrix. This chain is Cytochrome c oxidase subunit 3 (COIII), found in Strongylocentrotus purpuratus (Purple sea urchin).